The following is a 541-amino-acid chain: Zinc finger protein 513 (541 aa).

The segment at 1–118 (MPRRKQSHPQ…GEARGERPGP (118 aa)) is disordered. The segment covering 44–55 (LEFEEEEEEDEG) has biased composition (acidic residues). Phosphoserine occurs at positions 85 and 96. The segment covering 103 to 115 (EPARGPGEARGER) has biased composition (basic and acidic residues). 8 C2H2-type zinc fingers span residues 150-172 (YSCRLCAFVSHYSSHLKRHMQTH), 178-200 (FRCGRCPYASAQLVNLTRHTRTH), 206-228 (YRCPHCPFACSSLGNLRRHQRTH), 360-382 (FACSLCPFATHYPNHLARHMKTH), 388-410 (FRCARCPYASAHLDNLKRHQRVH), 416-438 (YKCPLCPYACGNLANLKRHGRIH), 444-466 (FRCSLCNYSCNQSMNLKRHMLRH), and 472-494 (FRCATCAYTTGHWDNYKRHQKVH). The interval 492–541 (KVHGHGGAGGPGLSAPEGWAPPHSPPSVLSTRGPAALGATGSRALHSDSP) is disordered.

Belongs to the krueppel C2H2-type zinc-finger protein family. Binds DNA. Can associate with the proximal promoter regions of PAX6 and SP4, and their known targets including ARR3, RHO, OPN1MW2 and OPN1SW. As to expression, widely expressed. In the eye, expression is greatest in the retina and least in the lens and cornea.

It is found in the nucleus. Transcriptional regulator that plays a role in retinal development and maintenance. This is Zinc finger protein 513 (Znf513) from Mus musculus (Mouse).